Consider the following 224-residue polypeptide: Polyadenylate-binding protein 2 (224 aa).

Acidic residues predominate over residues 1–36; it reads MADEDITLNEDQLLESLEETNGEQETEIATEVEEEG. The disordered stretch occupies residues 1 to 40; it reads MADEDITLNEDQLLESLEETNGEQETEIATEVEEEGSMQI. A coiled-coil region spans residues 9–74; it reads NEDQLLESLE…QSEVDKQMAG (66 aa). An RRM domain is found at 96-173; the sequence is RSVYVGNVDY…RQIKVMSKRT (78 aa).

Interacts with ZC3H3. Expressed ubiquitously in all transcriptionally active cells.

It is found in the nucleus. It localises to the cytoplasm. Functionally, involved in the 3'-end formation of mRNA precursors (pre-mRNA) by the addition of a poly(A) tail of 200-250 nt to the upstream cleavage product. Stimulates poly(A) polymerase (PAPOLA) conferring processivity on the poly(A) tail elongation reaction and also controls the poly(A) tail length. Increases the affinity of poly(A) polymerase for RNA. Binds to poly(A) and to poly(G) with high affinity. May protect the poly(A) tail from degradation. Plays a role in the positive regulation of alpha-1,3 fucosylation, possibly by cooperating with swm which regulates nuclear export of fucosyltransferase FucTA. Involved in germline stem cell transit amplification, differentiation and mitosis-to-meiosis transition. In Drosophila melanogaster (Fruit fly), this protein is Polyadenylate-binding protein 2.